The sequence spans 247 residues: ATP synthase subunit a, chloroplastic (247 aa).

Transmembrane regions (helical) follow at residues 38 to 58 (QVLI…ILVV), 95 to 115 (VPFI…GALL), 134 to 154 (INTT…AGIS), 199 to 219 (LVVV…VMFL), and 220 to 240 (GLFT…AYIG).

This sequence belongs to the ATPase A chain family. As to quaternary structure, F-type ATPases have 2 components, CF(1) - the catalytic core - and CF(0) - the membrane proton channel. CF(1) has five subunits: alpha(3), beta(3), gamma(1), delta(1), epsilon(1). CF(0) has four main subunits: a, b, b' and c.

It is found in the plastid. It localises to the chloroplast thylakoid membrane. Its function is as follows. Key component of the proton channel; it plays a direct role in the translocation of protons across the membrane. This Pisum sativum (Garden pea) protein is ATP synthase subunit a, chloroplastic.